We begin with the raw amino-acid sequence, 1342 residues long: DNA-directed RNA polymerase subunit beta (1342 aa).

The protein belongs to the RNA polymerase beta chain family. In terms of assembly, the RNAP catalytic core consists of 2 alpha, 1 beta, 1 beta' and 1 omega subunit. When a sigma factor is associated with the core the holoenzyme is formed, which can initiate transcription.

It carries out the reaction RNA(n) + a ribonucleoside 5'-triphosphate = RNA(n+1) + diphosphate. In terms of biological role, DNA-dependent RNA polymerase catalyzes the transcription of DNA into RNA using the four ribonucleoside triphosphates as substrates. This chain is DNA-directed RNA polymerase subunit beta, found in Pseudoalteromonas atlantica (strain T6c / ATCC BAA-1087).